We begin with the raw amino-acid sequence, 366 residues long: Quinolinate synthase (366 aa).

Positions 44 and 61 each coordinate iminosuccinate. [4Fe-4S] cluster is bound at residue Cys108. Residues 139–141 (YIN) and Ser160 contribute to the iminosuccinate site. Cys228 lines the [4Fe-4S] cluster pocket. Iminosuccinate-binding positions include 254 to 256 (HPE) and Thr271. Cys318 provides a ligand contact to [4Fe-4S] cluster.

Belongs to the quinolinate synthase family. Type 3 subfamily. It depends on [4Fe-4S] cluster as a cofactor.

It localises to the cytoplasm. It carries out the reaction iminosuccinate + dihydroxyacetone phosphate = quinolinate + phosphate + 2 H2O + H(+). It functions in the pathway cofactor biosynthesis; NAD(+) biosynthesis; quinolinate from iminoaspartate: step 1/1. In terms of biological role, catalyzes the condensation of iminoaspartate with dihydroxyacetone phosphate to form quinolinate. The protein is Quinolinate synthase of Listeria monocytogenes serotype 4b (strain F2365).